We begin with the raw amino-acid sequence, 75 residues long: UPF0352 protein VV1_3121 (75 aa).

It belongs to the UPF0352 family.

In Vibrio vulnificus (strain CMCP6), this protein is UPF0352 protein VV1_3121.